The primary structure comprises 297 residues: MLKIGSHVSMSGKHMLLAASQEASSYGANTFMIYTGAPQNTRRKKIEDLNIEAGRAHMEENGISDIVVHAPYIINIANTTNPATFELGVEFLRSEIERTSAIGARQIVLHPGAHVGAGAETGIQKIIEGLNEVIDPNQNVQIALETMAGKGSECGRTFEELAQIIDGVTHNEHLSVCFDTCHTHDAGYDVVSDFDGVLNEFDKIVGIDRLKVLHINDSKNVRGARKDRHENIGFGEIGFDALQYIVHHDQLKDIPKILETPYVGEDKKNKKPPYRFEIEMLKNKQFDEELLEKIKQQ.

Zn(2+)-binding residues include H69, H110, E145, D179, H182, H214, D227, H229, and E259.

The protein belongs to the AP endonuclease 2 family. Zn(2+) serves as cofactor.

It carries out the reaction Endonucleolytic cleavage to 5'-phosphooligonucleotide end-products.. Endonuclease IV plays a role in DNA repair. It cleaves phosphodiester bonds at apurinic or apyrimidinic (AP) sites, generating a 3'-hydroxyl group and a 5'-terminal sugar phosphate. The protein is Probable endonuclease 4 of Bacillus licheniformis (strain ATCC 14580 / DSM 13 / JCM 2505 / CCUG 7422 / NBRC 12200 / NCIMB 9375 / NCTC 10341 / NRRL NRS-1264 / Gibson 46).